The chain runs to 168 residues: MLPQRLHPSRLLALALFSLVLGLAGCQTKPPQTGLSAEQIAVLQEQGFELRDEGWEFGMSSKVLFGNNLDRLNPDSRNTLTKIARALLAVDIDKVRLEGHTDNYGDEGYNQKLSERRAESVAAVFREAGMPAANIEVRGLGMSKPVADNKTRAGRSENRRVAIIVPAE.

The N-terminal stretch at Met1–Gly25 is a signal peptide. A lipid anchor (N-palmitoyl cysteine) is attached at Cys26. A lipid anchor (S-diacylglycerol cysteine) is attached at Cys26. The 116-residue stretch at Glu53–Glu168 folds into the OmpA-like domain.

This sequence belongs to the outer membrane OOP (TC 1.B.6) superfamily. As to quaternary structure, homodimer. Interacts with YfiR. The YfiB-YfiR complex is a 2:2 heterotetramer.

The protein localises to the cell outer membrane. With respect to regulation, both lipid anchor in the outer membrane and peptidoglycan binding are required for full activity. Once activated by certain cell stress, the dimeric YfiB transforms from a compact conformation to a stretched conformation, allowing the periplasmic domain of the membrane-anchored YfiB to penetrate the cell wall and sequester the YfiR dimer. GMP enhances the binding affinity between YfiB and YfiR. Its function is as follows. Activates the diguanylate cyclase TpbB/YfiN by sequestering YfiR at the outer membrane, which counteracts the YfiR-mediated repression of TpbB/YfiN at the inner membrane and leads to increased c-di-GMP production. May act as a sensor of envelope stress. Part of the YfiB-TpbB-YfiR (or yfiBNR) system, encoding a tripartite signaling module that modulates intracellular c-di-GMP levels. The system is a key regulator of the small colony variant (SCV) phenotype, and plays an important role in biofilm formation and in vivo persistence. The c-di-GMP produced by TpbB/YfiN stimulates the production of the Pel and Psl exopolysaccharides, which promotes surface attachment, generates an SCV phenotype and confers resistance against phagocytosis. The protein is Outer-membrane lipoprotein YfiB of Pseudomonas aeruginosa (strain ATCC 15692 / DSM 22644 / CIP 104116 / JCM 14847 / LMG 12228 / 1C / PRS 101 / PAO1).